The chain runs to 179 residues: Large ribosomal subunit protein uL5 (179 aa).

The protein belongs to the universal ribosomal protein uL5 family. In terms of assembly, part of the 50S ribosomal subunit; part of the 5S rRNA/L5/L18/L25 subcomplex. Contacts the 5S rRNA and the P site tRNA. Forms a bridge to the 30S subunit in the 70S ribosome.

This is one of the proteins that bind and probably mediate the attachment of the 5S RNA into the large ribosomal subunit, where it forms part of the central protuberance. In the 70S ribosome it contacts protein S13 of the 30S subunit (bridge B1b), connecting the 2 subunits; this bridge is implicated in subunit movement. Contacts the P site tRNA; the 5S rRNA and some of its associated proteins might help stabilize positioning of ribosome-bound tRNAs. This chain is Large ribosomal subunit protein uL5, found in Herpetosiphon aurantiacus (strain ATCC 23779 / DSM 785 / 114-95).